The sequence spans 254 residues: 3-deoxy-manno-octulosonate cytidylyltransferase (254 aa).

The protein belongs to the KdsB family.

It localises to the cytoplasm. The enzyme catalyses 3-deoxy-alpha-D-manno-oct-2-ulosonate + CTP = CMP-3-deoxy-beta-D-manno-octulosonate + diphosphate. It functions in the pathway nucleotide-sugar biosynthesis; CMP-3-deoxy-D-manno-octulosonate biosynthesis; CMP-3-deoxy-D-manno-octulosonate from 3-deoxy-D-manno-octulosonate and CTP: step 1/1. The protein operates within bacterial outer membrane biogenesis; lipopolysaccharide biosynthesis. Activates KDO (a required 8-carbon sugar) for incorporation into bacterial lipopolysaccharide in Gram-negative bacteria. The chain is 3-deoxy-manno-octulosonate cytidylyltransferase from Chlamydia abortus (strain DSM 27085 / S26/3) (Chlamydophila abortus).